The following is a 237-amino-acid chain: Terpene cyclase spyD (237 aa).

The next 7 helical transmembrane spans lie at 17-37 (IYNV…IVTV), 47-67 (AIPL…VLVY), 71-91 (YLLF…IVYG), 109-129 (HLPL…YALA), 138-158 (IHGG…CQLL), 167-187 (SWTM…GEFL), and 206-226 (WCTG…WYMG).

Belongs to the paxB family.

It localises to the membrane. The catalysed reaction is (S)-(2E,6E,10E)-epoxygeranylgeranyl-triacetate lactone = sartorypyrone F. The enzyme catalyses (S)-(2E,6E,10E)-epoxygeranylgeranyl-triacetate lactone = sartorypyrone D. The protein operates within secondary metabolite biosynthesis; terpenoid biosynthesis. Terpene cyclase; part of the gene cluster that mediates the biosynthesis of meroterpenoids called sartorypyrones. Within the pathway, spyD catalyzes the cyclization of epoxygeranylgeranyl-triacetate lactone. SpyD exhibits promiscuous activity, resulting in the formation of bicyclic sartorypyrone F and monocyclic sartorypyrone D. The biosynthesis of sartorypyrones begins with the production of triacetic acid lactone (TAL) by the NR-PKS spyA using one molecule of acetyl-CoA and two molecules of malonyl-CoA. The prenyltransferase spyF then conjugates geranylgeranyl pyrophosphate (GGPP) to TAL to form geranylgeranyl-triacetate lactone, for which the pathway-specific geranylgeranyl pyrophosphate synthase (GGPS) spyE is required to provide GGPP. Subsequently, geranylgeranyl-triacetate lactone is epoxidized at the terminal olein by the FAD-dependent monooxygenase spyC, followed by cyclization of the terpenoid component catalyzed by the terpene cyclase spyD to produce both the bicyclic sartorypyrone F and the monocyclic sartorypyrone D. Finally, the last step of the biosynthesis involves the acetylation of the meroterpenoids sartorypyrones D and F by the acetyltransferase SpyB to produce sartorypyrones A and G, respectively. This Aspergillus fumigatus (strain ATCC MYA-4609 / CBS 101355 / FGSC A1100 / Af293) (Neosartorya fumigata) protein is Terpene cyclase spyD.